Reading from the N-terminus, the 79-residue chain is Schistosomin (79 aa).

In terms of processing, contains four disulfide bonds. Growth-controlling neurosecretory light green cells, in the cerebral ganglia of the CNS.

It is found in the secreted. Anti-gonadotropic neuropeptide. It also decreases the binding capacity of calfluxin to membrane-bound receptors of the albumen gland. This leads to inhibition of the reproductive activities of the infected snail. The polypeptide is Schistosomin (Lymnaea stagnalis (Great pond snail)).